A 427-amino-acid polypeptide reads, in one-letter code: MRFDKSKEIFDNTKRYIPGGVNSPVRAFKNLSITPPVISKGKGCRIFDIDGNEYIDFVLSWGAMILGHCDPDVVNSIKEVVEDQIAFGAPTEIEYKMAKLVCETAQVDMVRFVNSGTEATMTAIRLAKGYTGKKKIVKFAGCYHGHHDIFLKEAGSAVAELRLKGIDEDIVQNTIVVEYNNLDSIEKAFKENKDEISAVIIEPVAGNMGVVPAKKEFLQALREICDLHGSLLIFDEVITGFRLSLKGARALYNVEPDLVTFGKIIGGGLPCGAVGGKKEIMQCLAPQGNVFQAGTMSGNPIVMSAGYATIKKLKENPDIYTYLELLAQKLEGNLAKVFSSSNLTFCINRVGSMLTVFFGVEKVENFEMAKKSNLSMFKKFAEYMITNGIYIPSSQFEAMFLSSAHTESDIERFAEVAEGFAKFVKKP.

Position 263 is an N6-(pyridoxal phosphate)lysine (Lys-263).

The protein belongs to the class-III pyridoxal-phosphate-dependent aminotransferase family. HemL subfamily. As to quaternary structure, homodimer. Pyridoxal 5'-phosphate is required as a cofactor.

Its subcellular location is the cytoplasm. The enzyme catalyses (S)-4-amino-5-oxopentanoate = 5-aminolevulinate. Its pathway is porphyrin-containing compound metabolism; protoporphyrin-IX biosynthesis; 5-aminolevulinate from L-glutamyl-tRNA(Glu): step 2/2. This is Glutamate-1-semialdehyde 2,1-aminomutase from Caldicellulosiruptor saccharolyticus (strain ATCC 43494 / DSM 8903 / Tp8T 6331).